Reading from the N-terminus, the 263-residue chain is Aquaglyceroporin (263 aa).

The tract at residues 1 to 22 (MDQFVFSGGSEGGGELGGDRER) is disordered. A run of 6 helical transmembrane segments spans residues 41–61 (KYFC…FGLA), 64–84 (GGAQ…ITLF), 113–133 (LCYV…GYGI), 157–177 (VIPT…YGVM), 180–200 (LTVP…GATM), and 222–242 (VAAL…AFLG).

Belongs to the MIP/aquaporin (TC 1.A.8) family. As to quaternary structure, multimer.

The protein resides in the vacuole membrane. It catalyses the reaction H2O(in) = H2O(out). It carries out the reaction glycerol(in) = glycerol(out). The enzyme catalyses urea(in) = urea(out). Mediates water and glycerol transport across cell membranes. Permeable to selected sugar alcohols of up to five carbons and urea. Permeable to methylamine/methylammonium. The polypeptide is Aquaglyceroporin (Toxoplasma gondii (strain ATCC 50611 / Me49)).